Here is a 205-residue protein sequence, read N- to C-terminus: Rho-related protein racI (205 aa).

GTP is bound at residue 12 to 19 (GDSKTGKT). The Effector region motif lies at 34 to 42 (YVPSHVDAT). Residues 59 to 63 (DSSAL) and 119 to 122 (TKCD) each bind GTP. Position 202 is a cysteine methyl ester (Cys-202). The S-geranylgeranyl cysteine moiety is linked to residue Cys-202. Residues 203–205 (IIQ) constitute a propeptide, removed in mature form.

Belongs to the small GTPase superfamily. Rho family.

The protein resides in the cell membrane. The polypeptide is Rho-related protein racI (racI) (Dictyostelium discoideum (Social amoeba)).